The primary structure comprises 1295 residues: DNA (cytosine-5)-methyltransferase CMT2 (1295 aa).

3 disordered regions span residues 1-23, 61-91, and 249-287; these read MLSPAKCESEEAQAPLDLHSSSR, RRSTTLNCNSPEENGGEGRVSQRKSSRGKSQ, and NSSKQSLGSNKRMRRSQRFMKGTENEGEENLGKSKGKGM. The segment covering 61–72 has biased composition (polar residues); sequence RRSTTLNCNSPE. A BAH domain is found at 578–693; it reads HTFSLGDFAY…VEYSTFQTLR (116 aa). The SAM-dependent MTase C5-type domain maps to 727–1268; the sequence is LPVLDLYSGC…YSLGMAFRGL (542 aa). Positions 814–835 are disordered; it reads SVNSTKETSGSSSSSDDDSDSE. Residues 837–902 enclose the Chromo domain; the sequence is YEVEKLVDIC…SGFKSKILPL (66 aa). Cys-915 is an active-site residue.

This sequence belongs to the class I-like SAM-binding methyltransferase superfamily. C5-methyltransferase family.

The protein localises to the nucleus. It catalyses the reaction a 2'-deoxycytidine in DNA + S-adenosyl-L-methionine = a 5-methyl-2'-deoxycytidine in DNA + S-adenosyl-L-homocysteine + H(+). Its function is as follows. May be involved in the CpXpG methylation and in gene silencing. The protein is DNA (cytosine-5)-methyltransferase CMT2 (CMT2) of Arabidopsis thaliana (Mouse-ear cress).